The sequence spans 714 residues: Polyribonucleotide nucleotidyltransferase (714 aa).

Residues D488 and D494 each coordinate Mg(2+). One can recognise a KH domain in the interval 555–614 (PRIEVMNIPVDKIREVIGSGGKVIREIVEKTGAKINIDDDGTVKIASASGKEIEAARKWI). The S1 motif domain maps to 624-692 (GQVYEGTVVK…ERGKVRLSMK (69 aa)).

Belongs to the polyribonucleotide nucleotidyltransferase family. The cofactor is Mg(2+).

It localises to the cytoplasm. It carries out the reaction RNA(n+1) + phosphate = RNA(n) + a ribonucleoside 5'-diphosphate. In terms of biological role, involved in mRNA degradation. Catalyzes the phosphorolysis of single-stranded polyribonucleotides processively in the 3'- to 5'-direction. This chain is Polyribonucleotide nucleotidyltransferase, found in Sinorhizobium medicae (strain WSM419) (Ensifer medicae).